The primary structure comprises 920 residues: Sensor histidine kinase SsrA (920 aa).

The Cytoplasmic segment spans residues 1–19 (MNLLNLKNTLQTSLVIRLT). Residues 20-40 (FLFLLTTIIIWLLSVLTAAYI) traverse the membrane as a helical segment. Residues 41–291 (SMVQKRQHII…YGNLHNRILK (251 aa)) are Periplasmic-facing. The helical transmembrane segment at 292-312 (IILQQIPFTLTALVLMTSAFC) threads the bilayer. The Cytoplasmic portion of the chain corresponds to 313-920 (WLLHRSLAKP…RMIFKNYTIT (608 aa)). The HAMP domain maps to 317 to 369 (RSLAKPLWRFVDVINKTATAPLSTRLPAQRLDELDSIAGAFNQLLDTLQVQYD). Positions 354-395 (AGAFNQLLDTLQVQYDNLENKVAERTQALNEAKKRAERANKR) form a coiled coil. The 213-residue stretch at 402 to 614 (VISHELRTPM…CVSLVLPLQE (213 aa)) folds into the Histidine kinase domain. Residues H405 and D549 each coordinate ATP. H405 carries the phosphohistidine; by autocatalysis modification. A Response regulatory domain is found at 690–808 (QILLVDDADI…TLARYISIAA (119 aa)). D739 is modified (4-aspartylphosphate).

Post-translationally, autophosphorylated.

The protein localises to the cell inner membrane. It carries out the reaction ATP + protein L-histidine = ADP + protein N-phospho-L-histidine.. In terms of biological role, member of the two-component regulatory system SsrA/SsrB (SpiR/SsrB) that is required for intracellular proliferation and systemic dissemination within the host. When inside acidic Salmonella-containing vesicles (SCV) within host cells the SsrA sensor kinase autophosphorylates and the phosphoryl group is transferred to the response regulator SsrB; phosphorylated SsrB activates the expression of genes encoding virulence proteins, including pathogenicity island 2 (SPI2) and other horizontally acquired genes, and antagonizes the action of transcriptional repressor hns (H-NS). The sequence is that of Sensor histidine kinase SsrA from Salmonella typhimurium (strain LT2 / SGSC1412 / ATCC 700720).